Here is a 132-residue protein sequence, read N- to C-terminus: uncharacterized protein (132 aa).

The N-terminal stretch at 1–18 (MRKIISMLFIPLFIFAMA) is a signal peptide.

This is an uncharacterized protein from Aquifex aeolicus (strain VF5).